A 184-amino-acid polypeptide reads, in one-letter code: Photosystem I assembly protein Ycf4 (184 aa).

Transmembrane regions (helical) follow at residues 22 to 42 and 57 to 77; these read FCWA…GTSS and IVFF…LFIS.

The protein belongs to the Ycf4 family.

The protein resides in the plastid. Its subcellular location is the chloroplast thylakoid membrane. Seems to be required for the assembly of the photosystem I complex. The protein is Photosystem I assembly protein Ycf4 of Helianthus annuus (Common sunflower).